The chain runs to 365 residues: MGSTGETQITPTHISDEEANLFAMQLASASVLPMILKSALELDLLEIIAKAGPGAQISPIEIASQLPTTNPDAPVMLDRMLRLLACYIILTCSVRTQQDGKVQRLYGLATVAKYLVKNEDGVSISALNLMNQDKVLMESWYHLKDAVLDGGIPFNKAYGMTAFEYHGTDPRFNKVFNKGMSDHSTITMKKILETYTGFEGLKSLVDVGGGTGAVINTIVSKYPTIKGINFDLPHVIEDAPSYPGVEHVGGDMFVSIPKADAVFMKWICHDWSDEHCLKFLKNCYEALPDNGKVIVAECILPVAPDSSLATKGVVHIDVIMLAHNPGGKERTQKEFEDLAKGAGFQGFKVHCNAFNTYIMEFLKKV.

Asn131 is a binding site for (E)-ferulate. S-adenosyl-L-homocysteine-binding residues include Gly208, Asp231, Asp251, Met252, Met264, and Lys265. His269 serves as the catalytic Proton acceptor. Position 270 (Asp270) interacts with (E)-5-hydroxyferulate. Active-site residues include Glu297 and Glu329.

It belongs to the class I-like SAM-binding methyltransferase superfamily. Cation-independent O-methyltransferase family. COMT subfamily. In terms of assembly, homodimer. In terms of tissue distribution, more abundant in roots and stems.

It catalyses the reaction (E)-caffeate + S-adenosyl-L-methionine = (E)-ferulate + S-adenosyl-L-homocysteine + H(+). The enzyme catalyses (E)-5-hydroxyferulate + S-adenosyl-L-methionine = (E)-sinapate + S-adenosyl-L-homocysteine + H(+). Its pathway is aromatic compound metabolism; phenylpropanoid biosynthesis. Catalyzes the conversion of caffeic acid to ferulic acid and of 5-hydroxyferulic acid to sinapic acid. The resulting products may subsequently be converted to the corresponding alcohols that are incorporated into lignins. The polypeptide is Caffeic acid 3-O-methyltransferase (Medicago sativa (Alfalfa)).